Here is an 856-residue protein sequence, read N- to C-terminus: DNA mismatch repair protein MutS (856 aa).

609 to 616 contacts ATP; that stretch reads GPNMSGKS.

It belongs to the DNA mismatch repair MutS family.

Functionally, this protein is involved in the repair of mismatches in DNA. It is possible that it carries out the mismatch recognition step. This protein has a weak ATPase activity. This is DNA mismatch repair protein MutS from Finegoldia magna (strain ATCC 29328 / DSM 20472 / WAL 2508) (Peptostreptococcus magnus).